A 291-amino-acid chain; its full sequence is Farnesyl diphosphate synthase (291 aa).

K44, R47, and H76 together coordinate isopentenyl diphosphate. D83 and D89 together coordinate Mg(2+). R94 serves as a coordination point for (2E)-geranyl diphosphate. R95 lines the isopentenyl diphosphate pocket. Residues K177, T178, Q215, and K232 each contribute to the (2E)-geranyl diphosphate site.

This sequence belongs to the FPP/GGPP synthase family. Mg(2+) is required as a cofactor.

It is found in the cytoplasm. It carries out the reaction isopentenyl diphosphate + (2E)-geranyl diphosphate = (2E,6E)-farnesyl diphosphate + diphosphate. The sequence is that of Farnesyl diphosphate synthase (fps) from Micrococcus luteus (Micrococcus lysodeikticus).